The sequence spans 99 residues: Aspartyl/glutamyl-tRNA(Asn/Gln) amidotransferase subunit C (99 aa).

Belongs to the GatC family. Heterotrimer of A, B and C subunits.

The catalysed reaction is L-glutamyl-tRNA(Gln) + L-glutamine + ATP + H2O = L-glutaminyl-tRNA(Gln) + L-glutamate + ADP + phosphate + H(+). It catalyses the reaction L-aspartyl-tRNA(Asn) + L-glutamine + ATP + H2O = L-asparaginyl-tRNA(Asn) + L-glutamate + ADP + phosphate + 2 H(+). Functionally, allows the formation of correctly charged Asn-tRNA(Asn) or Gln-tRNA(Gln) through the transamidation of misacylated Asp-tRNA(Asn) or Glu-tRNA(Gln) in organisms which lack either or both of asparaginyl-tRNA or glutaminyl-tRNA synthetases. The reaction takes place in the presence of glutamine and ATP through an activated phospho-Asp-tRNA(Asn) or phospho-Glu-tRNA(Gln). This chain is Aspartyl/glutamyl-tRNA(Asn/Gln) amidotransferase subunit C, found in Sulfurihydrogenibium sp. (strain YO3AOP1).